We begin with the raw amino-acid sequence, 253 residues long: Chorismate mutase 2, cytosolic (253 aa).

The 252-residue stretch at 2–253 folds into the Chorismate mutase domain; the sequence is DAAGGDQLSL…EVEYLLRRLD (252 aa).

In terms of assembly, homodimer. Interacts with Cmu1 of the fungal pathogen Ustilago maydis.

Its subcellular location is the cytoplasm. It is found in the cytosol. It catalyses the reaction chorismate = prephenate. It functions in the pathway metabolic intermediate biosynthesis; prephenate biosynthesis; prephenate from chorismate: step 1/1. With respect to regulation, no allosteric regulation. This chain is Chorismate mutase 2, cytosolic, found in Zea mays (Maize).